The following is a 591-amino-acid chain: 5'-nucleotidase domain-containing protein DDB_G0275467 (591 aa).

Composition is skewed to low complexity over residues 38-50 (STTT…SYST) and 68-78 (QHQQQQPQQHQ). A disordered region spans residues 38–88 (STTTTSGIKSYSTHNRSNNDTHTSKSNTIDQHQQQQPQQHQNNDNKHLFTP). The active-site Nucleophile is Asp-165. The Mg(2+) site is built by Asp-165 and Asp-167. Asp-167 serves as the catalytic Proton donor. Position 305-313 (305-313 (TAAVGKVHL)) interacts with substrate. Residue Asp-450 coordinates Mg(2+).

The protein belongs to the 5'(3')-deoxyribonucleotidase family. The cofactor is Mg(2+).

In Dictyostelium discoideum (Social amoeba), this protein is 5'-nucleotidase domain-containing protein DDB_G0275467.